We begin with the raw amino-acid sequence, 261 residues long: Beta cell expansion factor A (261 aa).

Residues 1 to 21 (MNKRNWLLALSLSLAFSPCYA) form the signal peptide. An SYLF domain region spans residues 99–261 (KTAKEARIAI…IDKDLTETSR (163 aa)).

It is found in the secreted. The protein resides in the host. Its function is as follows. Stimulates the proliferation of insulin-producing beta cells during development in gnotobiotic zebrafish and mice. BefA is a microbiome-derived protein that traffics from the host intestinal lumen to the pancreas to act directly on pancreatic islets. In pancreas, interacts directly with host beta cells and elicits their proliferation via a mechanism of increasing membrane permeabilization. Can also permeabilize bacterial cell membranes, but does not show killing of target bacteria. This is Beta cell expansion factor A from Aeromonas veronii.